Reading from the N-terminus, the 182-residue chain is Adenine phosphoribosyltransferase (182 aa).

The protein belongs to the purine/pyrimidine phosphoribosyltransferase family. Homodimer.

It localises to the cytoplasm. It carries out the reaction AMP + diphosphate = 5-phospho-alpha-D-ribose 1-diphosphate + adenine. It functions in the pathway purine metabolism; AMP biosynthesis via salvage pathway; AMP from adenine: step 1/1. Catalyzes a salvage reaction resulting in the formation of AMP, that is energically less costly than de novo synthesis. In Wolinella succinogenes (strain ATCC 29543 / DSM 1740 / CCUG 13145 / JCM 31913 / LMG 7466 / NCTC 11488 / FDC 602W) (Vibrio succinogenes), this protein is Adenine phosphoribosyltransferase.